A 416-amino-acid chain; its full sequence is Antigen EG13 (416 aa).

One can recognise an F-BAR domain in the interval 1-247; the sequence is MIQERADIEK…TVAKVDADAD (247 aa). Positions 297 to 327 are disordered; the sequence is LKTFTSPDRGGPIPGTTDSGSNISTSPVHTT. Over residues 312–327 the composition is skewed to polar residues; the sequence is TTDSGSNISTSPVHTT. In terms of domain architecture, SH3 spans 361 to 416; sequence RPGVPIRALYDYVGVEADELSFNSGDLFEKLEDEDEQGWCKGRKDGRVGLYPRQLR.

This chain is Antigen EG13 (EG13), found in Echinococcus granulosus (Hydatid tapeworm).